Here is a 340-residue protein sequence, read N- to C-terminus: MNFIQEINGKISLNGNFAFILVIATTDVSLIPGITVAGATPELTHFTPAADAEFLIKEKCISINSVPVTPTGIPTPAIISRASLKLVNATKLVVNAGSRVKPKIPFIDVGGEPGGDIRKFSLTRETSQRILENSIILGEELANSYDFLVIGESIPAGTTTAMAVLLSLGYDAADKVSSASPVNPKDLKRKVVYEAIKDLPSDFLGKISKVSDPMLISVAGITIGFRKRVLLAGGTQMTAAAAIIKEIDKKIIQNISIGTTKWIIQDSSSDIVSISRQVGVPVMASLLDFSKSKYSGLRAYEEGFVKEGVGAGGSSIIALSKGFTPQDILVEIEKIYSKLI.

Belongs to the UPF0284 family.

The protein is UPF0284 protein Saci_0020 of Sulfolobus acidocaldarius (strain ATCC 33909 / DSM 639 / JCM 8929 / NBRC 15157 / NCIMB 11770).